Consider the following 620-residue polypeptide: Zinc finger protein GLIS1 (620 aa).

Residues 108–132 form a disordered region; sequence PLTGDLGGPSKRARPGPASTDSHEG. Residues 195–220 form a C2H2-type 1 zinc finger; it reads QACRWVDCCAAYEQQEELVRHIEKSH. The C2H2-type 2; atypical zinc-finger motif lies at 229–256; sequence FTCFWAGCVRRYKPFNARYKLLIHMRVH. 3 C2H2-type zinc fingers span residues 262-286, 292-316, and 322-346; these read NKCM…LRSH, YLCQ…QRTH, and YACQ…VKAH. The short motif at 340–356 is the Bipartite nuclear localization signal element; it reads RKHVKAHSAKEQQVRKK. A disordered region spans residues 414 to 515; sequence ASGLLPPAHD…PPLPSPQGYQ (102 aa). Residues 477–488 are compositionally biased toward low complexity; it reads SSQSHSPGGQPF. Positions 489–510 are enriched in pro residues; it reads PTLPSKPSYPPFQSPPPPPLPS.

Belongs to the GLI C2H2-type zinc-finger protein family. As to quaternary structure, interacts with KLF4. Interacts with POU5F1 and/or POU5F1B. Interacts with SOX2.

It is found in the nucleus. Acts both as a repressor and an activator of transcription. Binds to the consensus sequence 5'-GACCACCCAC-3'. By controlling the expression of genes involved in cell differentiation inhibits the lineage commitment of multipotent cells. Prevents, for instance, the differentiation of multipotent mesenchymal cells into adipocyte and osteoblast. The protein is Zinc finger protein GLIS1 of Homo sapiens (Human).